The following is a 269-amino-acid chain: MSGIDAKKIRTRHFREAKVNGQKVSVLTSYDALSARIFDEAGVDMLLVGDSAANVVLGRDTTLSITLDEMIVLAKAVTIATKRALVVVDLPFGTYEVSPNQAVESAIRVMRETGAAAVKIEGGVEIAQTIRRIVDAGIPVVGHIGYTPQSEHSLGGHVVQGRGASSGKLIADARALEQAGAFAVVLEMVPAEAAREVTEDLSITTIGIGAGNGTDGQVLVWQDAFGLNRGKKPRFVREYATLGDSLHDAAQAYIADIHAGTFPGEAESF.

Mg(2+) is bound by residues aspartate 50 and aspartate 89. Residues 50 to 51, aspartate 89, and lysine 119 contribute to the 3-methyl-2-oxobutanoate site; that span reads DS. Glutamate 121 is a Mg(2+) binding site. Catalysis depends on glutamate 187, which acts as the Proton acceptor.

The protein belongs to the PanB family. In terms of assembly, homodecamer; pentamer of dimers. Requires Mg(2+) as cofactor.

The protein localises to the cytoplasm. The enzyme catalyses 3-methyl-2-oxobutanoate + (6R)-5,10-methylene-5,6,7,8-tetrahydrofolate + H2O = 2-dehydropantoate + (6S)-5,6,7,8-tetrahydrofolate. It participates in cofactor biosynthesis; (R)-pantothenate biosynthesis; (R)-pantoate from 3-methyl-2-oxobutanoate: step 1/2. Its function is as follows. Catalyzes the reversible reaction in which hydroxymethyl group from 5,10-methylenetetrahydrofolate is transferred onto alpha-ketoisovalerate to form ketopantoate. In Corynebacterium glutamicum (strain ATCC 13032 / DSM 20300 / JCM 1318 / BCRC 11384 / CCUG 27702 / LMG 3730 / NBRC 12168 / NCIMB 10025 / NRRL B-2784 / 534), this protein is 3-methyl-2-oxobutanoate hydroxymethyltransferase (panB).